The chain runs to 160 residues: Endoribonuclease YbeY (160 aa).

The Zn(2+) site is built by H118, H122, and H128.

This sequence belongs to the endoribonuclease YbeY family. It depends on Zn(2+) as a cofactor.

Its subcellular location is the cytoplasm. Functionally, single strand-specific metallo-endoribonuclease involved in late-stage 70S ribosome quality control and in maturation of the 3' terminus of the 16S rRNA. The chain is Endoribonuclease YbeY from Treponema pallidum (strain Nichols).